An 827-amino-acid chain; its full sequence is Penicillin-binding protein 1A (827 aa).

The Cytoplasmic segment spans residues 1–18 (MGKKKKKRKSSAFKIILN). A helical; Signal-anchor for type II membrane protein transmembrane segment spans residues 19-39 (VFLSIFLVAGVAFGGIVFAMI). Residues 40-827 (KTAPPLNVQQ…QNHEDNKNKQ (788 aa)) lie on the Extracellular side of the membrane. The segment at 57 to 229 (SILYDDKGQY…PSVYYPYSSA (173 aa)) is transglycosylase. Glutamate 96 functions as the Proton donor; for transglycosylase activity in the catalytic mechanism. A transpeptidase region spans residues 357-641 (ASAVIMDYHN…AARLWGDIMK (285 aa)). Catalysis depends on serine 398, which acts as the Acyl-ester intermediate; for transpeptidase activity. The interval 755–827 (GSLPPTEEKN…QNHEDNKNKQ (73 aa)) is disordered. Over residues 760–790 (TEEKNNSNTRDKNKDKNKDKDKNKNKDKNPS) the composition is skewed to basic and acidic residues. Positions 791–817 (QDKPNNNNNNNNNDNNNNTKPPENDSN) are enriched in low complexity. The span at 818 to 827 (QNHEDNKNKQ) shows a compositional bias: basic and acidic residues.

It in the N-terminal section; belongs to the glycosyltransferase 51 family. This sequence in the C-terminal section; belongs to the transpeptidase family.

It is found in the cell membrane. The enzyme catalyses [GlcNAc-(1-&gt;4)-Mur2Ac(oyl-L-Ala-gamma-D-Glu-L-Lys-D-Ala-D-Ala)](n)-di-trans,octa-cis-undecaprenyl diphosphate + beta-D-GlcNAc-(1-&gt;4)-Mur2Ac(oyl-L-Ala-gamma-D-Glu-L-Lys-D-Ala-D-Ala)-di-trans,octa-cis-undecaprenyl diphosphate = [GlcNAc-(1-&gt;4)-Mur2Ac(oyl-L-Ala-gamma-D-Glu-L-Lys-D-Ala-D-Ala)](n+1)-di-trans,octa-cis-undecaprenyl diphosphate + di-trans,octa-cis-undecaprenyl diphosphate + H(+). It carries out the reaction Preferential cleavage: (Ac)2-L-Lys-D-Ala-|-D-Ala. Also transpeptidation of peptidyl-alanyl moieties that are N-acyl substituents of D-alanine.. Its pathway is cell wall biogenesis; peptidoglycan biosynthesis. In terms of biological role, cell wall formation. Synthesis of cross-linked peptidoglycan from the lipid intermediates. The enzyme has a penicillin-insensitive transglycosylase N-terminal domain (formation of linear glycan strands) and a penicillin-sensitive transpeptidase C-terminal domain (cross-linking of the peptide subunits). This chain is Penicillin-binding protein 1A (pbpA), found in Clostridium botulinum (strain Langeland / NCTC 10281 / Type F).